A 260-amino-acid chain; its full sequence is RxLR effector protein BLR38 (260 aa).

Positions Met-1–Gly-18 are cleaved as a signal peptide. Residues Arg-46–Arg-49 carry the RxLR motif. The Nuclear localuization signal (NLS) signature appears at Met-136–Glu-148.

This sequence belongs to the RxLR effector family.

The protein localises to the secreted. The protein resides in the host nucleus. In terms of biological role, secreted effector that triggers a robust hypersensitive response (HR) in Lactuca serriola LS102. The response to BLN06 was visible as strong necrosis. Although effector recognition is frequently associated with single dominant R gene loci, the recognition of BLR38 requires 2 unlinked loci that display incomplete dominance. The polypeptide is RxLR effector protein BLR38 (Bremia lactucae (Lettuce downy mildew)).